Here is a 236-residue protein sequence, read N- to C-terminus: Elastase-1 (236 aa).

Residues 1–236 (VVGGRVAQPN…AYISWMNGIM (236 aa)) form the Peptidase S1 domain. Cys30 and Cys46 form a disulfide bridge. His45 (charge relay system) is an active-site residue. Glu59, Asn61, Thr64, Glu66, and Glu69 together coordinate Ca(2+). Residue Asp93 is the Charge relay system of the active site. Disulfide bonds link Cys127/Cys193, Cys158/Cys174, and Cys183/Cys213. Ser187 functions as the Charge relay system in the catalytic mechanism.

The protein belongs to the peptidase S1 family. Elastase subfamily. The cofactor is Ca(2+). Pancreas.

It is found in the secreted. The enzyme catalyses Hydrolysis of proteins, including elastin. Preferential cleavage: Ala-|-Xaa.. Functionally, acts upon elastin. This is Elastase-1 from Salmo salar (Atlantic salmon).